A 469-amino-acid chain; its full sequence is Relaxin-3 receptor 1 (469 aa).

The Extracellular segment spans residues 1 to 81; that stretch reads MQMADAATIA…ESADTEARVR (81 aa). 2 N-linked (GlcNAc...) asparagine glycosylation sites follow: asparagine 36 and asparagine 40. A helical transmembrane segment spans residues 82 to 102; it reads ILISVVYWVVCALGLAGNLLV. Topologically, residues 103 to 119 are cytoplasmic; the sequence is LYLMKSMQGWRKSSINL. The helical transmembrane segment at 120–140 threads the bilayer; sequence FVTNLALTDFQFVLTLPFWAV. Residues 141–156 are Extracellular-facing; that stretch reads ENALDFKWPFGKAMCK. An intrachain disulfide couples cysteine 155 to cysteine 247. The helical transmembrane segment at 157–177 threads the bilayer; it reads IVSMVTSMNMYASVFFLTAMS. The Cytoplasmic portion of the chain corresponds to 178-215; the sequence is VTRYHSVASALKSHRTRGHGRGDCCGRSLGDSCCFSAK. The chain crosses the membrane as a helical span at residues 216–236; the sequence is ALCVWIWALAALASLPSAIFS. Residues 237–270 are Extracellular-facing; it reads TTVKVMGEELCLVRFPDKLLGRDRQFWLGLYHSQ. A helical membrane pass occupies residues 271–291; it reads KVLLGFVLPLGIIILCYLLLV. Residues 292 to 329 lie on the Cytoplasmic side of the membrane; that stretch reads RFIADRRAAGTKGGAAVAGGRPTGASARRLSKVTKSVT. Residues 330–350 traverse the membrane as a helical segment; that stretch reads IVVLSFFLCWLPNQALTTWSI. At 351–356 the chain is on the extracellular side; that stretch reads LIKFNA. A helical transmembrane segment spans residues 357–377; it reads VPFSQEYFLCQVYAFPVSVCL. Topologically, residues 378-469 are cytoplasmic; that stretch reads AHSNSCLNPV…YDLLPSSSAY (92 aa).

The protein belongs to the G-protein coupled receptor 1 family. Expressed predominantly in brain regions. Highest expression in substantia nigra and pituitary, followed by hippocampus, spinal cord, amygdala, caudate nucleus and corpus callosum, quite low level in cerebellum. In peripheral tissues, relatively high levels in adrenal glands, low levels in pancreas, salivary gland, placenta, mammary gland and testis.

The protein localises to the cell membrane. Functionally, receptor for RNL3/relaxin-3. Binding of the ligand inhibit cAMP accumulation. This chain is Relaxin-3 receptor 1 (RXFP3), found in Homo sapiens (Human).